Reading from the N-terminus, the 358-residue chain is Alanine racemase (358 aa).

Residue lysine 34 is the Proton acceptor; specific for D-alanine of the active site. The residue at position 34 (lysine 34) is an N6-(pyridoxal phosphate)lysine. Arginine 130 provides a ligand contact to substrate. The active-site Proton acceptor; specific for L-alanine is tyrosine 254. Methionine 302 is a substrate binding site.

This sequence belongs to the alanine racemase family. Pyridoxal 5'-phosphate is required as a cofactor.

It carries out the reaction L-alanine = D-alanine. It participates in amino-acid biosynthesis; D-alanine biosynthesis; D-alanine from L-alanine: step 1/1. Catalyzes the interconversion of L-alanine and D-alanine. May also act on other amino acids. This Stutzerimonas stutzeri (strain A1501) (Pseudomonas stutzeri) protein is Alanine racemase (alr).